A 165-amino-acid polypeptide reads, in one-letter code: Large ribosomal subunit protein uL10 (165 aa).

Belongs to the universal ribosomal protein uL10 family. In terms of assembly, part of the ribosomal stalk of the 50S ribosomal subunit. The N-terminus interacts with L11 and the large rRNA to form the base of the stalk. The C-terminus forms an elongated spine to which L12 dimers bind in a sequential fashion forming a multimeric L10(L12)X complex.

Functionally, forms part of the ribosomal stalk, playing a central role in the interaction of the ribosome with GTP-bound translation factors. This is Large ribosomal subunit protein uL10 from Enterobacter sp. (strain 638).